The following is a 158-amino-acid chain: Phosphopantetheine adenylyltransferase (158 aa).

Position 10 (threonine 10) interacts with substrate. ATP contacts are provided by residues 10–11 (TF) and histidine 18. Positions 42, 74, and 88 each coordinate substrate. Residues 89–91 (GIR), glutamate 99, and 124–130 (WRYLSST) contribute to the ATP site.

It belongs to the bacterial CoaD family. In terms of assembly, homohexamer. Mg(2+) serves as cofactor.

It is found in the cytoplasm. The enzyme catalyses (R)-4'-phosphopantetheine + ATP + H(+) = 3'-dephospho-CoA + diphosphate. It participates in cofactor biosynthesis; coenzyme A biosynthesis; CoA from (R)-pantothenate: step 4/5. Its function is as follows. Reversibly transfers an adenylyl group from ATP to 4'-phosphopantetheine, yielding dephospho-CoA (dPCoA) and pyrophosphate. In Actinobacillus pleuropneumoniae serotype 5b (strain L20), this protein is Phosphopantetheine adenylyltransferase.